The following is a 124-amino-acid chain: UPF0102 protein tll1737 (124 aa).

The protein belongs to the UPF0102 family.

The sequence is that of UPF0102 protein tll1737 from Thermosynechococcus vestitus (strain NIES-2133 / IAM M-273 / BP-1).